Reading from the N-terminus, the 359-residue chain is Methionine import ATP-binding protein MetN (359 aa).

The segment at 1–21 (MSTPASTPAPDGSHQRDHHPG) is disordered. In terms of domain architecture, ABC transporter spans 24–264 (VEFRGVTKVF…PQTTVAQRFV (241 aa)). Residue 61-68 (GYSGAGKS) coordinates ATP.

Belongs to the ABC transporter superfamily. Methionine importer (TC 3.A.1.24) family. As to quaternary structure, the complex is composed of two ATP-binding proteins (MetN), two transmembrane proteins (MetI) and a solute-binding protein (MetQ).

Its subcellular location is the cell membrane. The catalysed reaction is L-methionine(out) + ATP + H2O = L-methionine(in) + ADP + phosphate + H(+). It catalyses the reaction D-methionine(out) + ATP + H2O = D-methionine(in) + ADP + phosphate + H(+). Functionally, part of the ABC transporter complex MetNIQ involved in methionine import. Responsible for energy coupling to the transport system. This Corynebacterium efficiens (strain DSM 44549 / YS-314 / AJ 12310 / JCM 11189 / NBRC 100395) protein is Methionine import ATP-binding protein MetN.